A 423-amino-acid chain; its full sequence is Testin (423 aa).

Disordered regions lie at residues methionine 1–serine 21 and glutamate 138–cysteine 169. Positions methionine 97 to asparagine 204 constitute a PET domain. Over residues proline 160–cysteine 169 the composition is skewed to basic and acidic residues. LIM zinc-binding domains lie at tyrosine 236 to glutamate 299, proline 301 to valine 361, and glutamine 364 to serine 423.

It belongs to the prickle / espinas / testin family. In terms of assembly, interacts via LIM domain 1 with ZYX. Interacts (via LIM domain 3) with ENAH and VASP. Interacts with ALKBH4, talin, actin, alpha-actinin, GRIP1 and PXN. Interacts (via LIM domain 2) with ACTL7A (via N-terminus). Heterodimer with ACTL7A; the heterodimer interacts with ENAH to form a heterotrimer. As to expression, detected at the acrosome of round spermatids (at protein level). Isoform TES1 transcript is highly expressed in adult testis and detected at low levels in other tissues. Isoform TES2 transcript is highly expressed in testis, kidney and spleen; intermediate in thymus, submaxillary gland and lung; detected at low levels in other tissues.

It is found in the cytoplasm. It localises to the cell junction. The protein resides in the focal adhesion. Its function is as follows. Scaffold protein that may play a role in cell adhesion, cell spreading and in the reorganization of the actin cytoskeleton. Plays a role in the regulation of cell proliferation. May act as a tumor suppressor. This Mus musculus (Mouse) protein is Testin (Tes).